Here is a 319-residue protein sequence, read N- to C-terminus: Annexin A4 (319 aa).

Phosphothreonine is present on Thr7. The residue at position 12 (Ser12) is a Phosphoserine. Annexin repeat units lie at residues 14 to 85, 86 to 157, 169 to 241, and 245 to 316; these read FNAT…GMMT, PTVL…SLTA, ALVR…AIVK, and NKPA…ILCG. Lys213, Lys293, and Lys300 each carry N6-acetyllysine.

Belongs to the annexin family.

The protein resides in the zymogen granule membrane. Calcium/phospholipid-binding protein which promotes membrane fusion and is involved in exocytosis. The polypeptide is Annexin A4 (Anxa4) (Rattus norvegicus (Rat)).